We begin with the raw amino-acid sequence, 362 residues long: Serine/threonine-protein kinase SRK2D (362 aa).

One can recognise a Protein kinase domain in the interval 23–279 (YDFVKDIGSG…IPEITSDKWF (257 aa)). Residues 29–37 (IGSGNFGVA) and Lys-52 each bind ATP. Residue Asp-142 is the Proton acceptor of the active site.

This sequence belongs to the protein kinase superfamily. Ser/Thr protein kinase family. Interacts with ABI1. Interacts with I-2, TOPP1 and TOPP2. Interacts with FREE1 (via C-terminus). In terms of tissue distribution, expressed in seeds, seedlings, roots (especially in tips), stems, leaves, shoots, flowers and siliques.

It catalyses the reaction L-seryl-[protein] + ATP = O-phospho-L-seryl-[protein] + ADP + H(+). It carries out the reaction L-threonyl-[protein] + ATP = O-phospho-L-threonyl-[protein] + ADP + H(+). Its function is as follows. Together with SRK2I, key component and activator of the abscisic acid (ABA) signaling pathway that regulates numerous ABA responses, such as seed germination, Pro accumulation, root growth inhibition, dormancy and seedling growth, and, to a lesser extent, stomatal closure. In response to ABA, phosphorylates the ESCRT-I complex component FREE1, which is required for ABA-induced FREE1 nuclear import. The sequence is that of Serine/threonine-protein kinase SRK2D (SRK2D) from Arabidopsis thaliana (Mouse-ear cress).